The primary structure comprises 519 residues: Acetylcholine receptor subunit gamma (519 aa).

The first 22 residues, 1-22 (MHGGQGPQLLLLLLATCLGAQS), serve as a signal peptide directing secretion. The Extracellular segment spans residues 23-240 (RNQEERLLAD…VVFYLLIQRK (218 aa)). 2 N-linked (GlcNAc...) asparagine glycosylation sites follow: Asn52 and Asn163. The cysteines at positions 150 and 164 are disulfide-linked. The next 3 helical transmembrane spans lie at 241–265 (PLFY…IYFL), 274–292 (CTVA…FLVA), and 308–329 (YLTF…VLNV). The Cytoplasmic segment spans residues 330–476 (SLRSPHTHSM…WLLVGRVLDR (147 aa)). A helical membrane pass occupies residues 477-497 (VCFLAMLSLFICGTAGIFLMA).

It belongs to the ligand-gated ion channel (TC 1.A.9) family. Acetylcholine receptor (TC 1.A.9.1) subfamily. Gamma/CHRNG sub-subfamily. Pentamer of two alpha chains, and one each of the beta, delta, and gamma (in immature muscle) or epsilon (in mature muscle) chains.

It is found in the postsynaptic cell membrane. The protein localises to the cell membrane. The enzyme catalyses K(+)(in) = K(+)(out). The catalysed reaction is Na(+)(in) = Na(+)(out). Functionally, after binding acetylcholine, the AChR responds by an extensive change in conformation that affects all subunits and leads to opening of an ion-conducting channel across the plasma membrane. This chain is Acetylcholine receptor subunit gamma (Chrng), found in Rattus norvegicus (Rat).